Consider the following 226-residue polypeptide: Putative N-acetylmannosamine-6-phosphate 2-epimerase (226 aa).

It belongs to the NanE family.

The enzyme catalyses an N-acyl-D-glucosamine 6-phosphate = an N-acyl-D-mannosamine 6-phosphate. It participates in amino-sugar metabolism; N-acetylneuraminate degradation; D-fructose 6-phosphate from N-acetylneuraminate: step 3/5. Its function is as follows. Converts N-acetylmannosamine-6-phosphate (ManNAc-6-P) to N-acetylglucosamine-6-phosphate (GlcNAc-6-P). The sequence is that of Putative N-acetylmannosamine-6-phosphate 2-epimerase from Mycoplasma capricolum subsp. capricolum (strain California kid / ATCC 27343 / NCTC 10154).